Here is a 250-residue protein sequence, read N- to C-terminus: Tumor necrosis factor ligand superfamily member 13 (250 aa).

The propeptide occupies 1–104 (MPASSPFLLA…ENGERSRKRR (104 aa)). Disordered regions lie at residues 61–82 (EVSR…PWQS) and 89–108 (DALE…AVLT). The THD domain occupies 116–250 (SVLHLVPINA…HGTFLGFVKL (135 aa)). An N-linked (GlcNAc...) asparagine glycan is attached at N124. A disulfide bridge links C196 with C211.

Belongs to the tumor necrosis factor family. As to quaternary structure, homotrimer. In terms of processing, the precursor is cleaved by furin. Expressed at high levels in transformed cell lines, cancers of colon, thyroid, lymphoid tissues and specifically expressed in monocytes and macrophages.

It is found in the secreted. Functionally, cytokine that binds to TNFRSF13B/TACI and to TNFRSF17/BCMA. Plays a role in the regulation of tumor cell growth. May be involved in monocyte/macrophage-mediated immunological processes. The sequence is that of Tumor necrosis factor ligand superfamily member 13 (TNFSF13) from Homo sapiens (Human).